The primary structure comprises 3418 residues: Breast cancer type 2 susceptibility protein (3418 aa).

The tract at residues 1–40 (MPIGSKERPTFFEIFKTRCNKADLGPISLNWFEELSSEAP) is interaction with PALB2. The interval 37–68 (SEAPPYNSEPAEESEHKNNNYEPNLFKTPQRK) is disordered. A Phosphoserine modification is found at serine 70. The tract at residues 358–381 (VEPNDTDPLDSNVANQKPFESGSD) is disordered. A phosphoserine mark is found at serine 445, serine 492, and serine 755. The segment at 639–1000 (LHSSVKRSCS…NKWAGLLGPI (362 aa)) is interaction with NPM1. 6 BRCA2 repeats span residues 1002–1036 (NHSF…DIEE), 1212–1246 (NEVG…DIEN), 1421–1455 (FETS…QKPE), 1517–1551 (KEPT…EKEQ), 1664–1698 (IENS…EGIF), and 1837–1871 (FEVG…DSFS). The tract at residues 1003-2082 (HSFGGSFRTA…LHKVKGVLEE (1080 aa)) is interaction with RAD51. The interval 1338 to 1781 (GSDSSKNDTV…IEPVLKNVED (444 aa)) is interaction with POLH. Positions 1410-1595 (TATKTEQNIK…TAAPKCKEMQ (186 aa)) are required for stimulation of POLH DNA polymerization activity. At serine 1970 the chain carries Phosphoserine. The stretch at 1971–2005 (SANTCGIFSTASGKSVQVSDASLQNARQVFSEIED) is one BRCA2 7 repeat. The residue at position 2035 (threonine 2035) is a Phosphothreonine. A BRCA2 8 repeat occupies 2051 to 2085 (NSSAFSGFSTASGKQVSILESSLHKVKGVLEEFDL). Serine 2095 carries the post-translational modification Phosphoserine. Residues 2270–2337 (GKRRGEPLIL…EPITCVPFRT (68 aa)) form an interaction with HSF2BP region. The interval 2350-2545 (TAPGQEFLSK…SHKQLYTYGV (196 aa)) is interaction with FANCD2. The segment at 2430–2450 (ENRQKQNIDGHGSDDSKNKIN) is disordered. Residues 2481 to 2832 (ITSLQNARDI…QRAYPIQWME (352 aa)) form an interaction with SEM1 region. The Nuclear export signal; masked by interaction with SEM1 motif lies at 2682-2698 (AAKTLVLCVSDIISLSA). Residue serine 3291 is modified to Phosphoserine; by CDK1 and CDK2. A Phosphoserine modification is found at serine 3319. Threonine 3387 is subject to Phosphothreonine; by CHEK1 and CHEK2. The tract at residues 3393–3418 (EQESSQASTEECEKNKQDTITTKKYI) is disordered.

As to quaternary structure, monomer and dimer. Interacts with RAD51; regulates RAD51 recruitment and function at sites of DNA repair. Interacts with WDR16, USP11, DMC1, ROCK2 and NPM1. Interacts with SEM1; the interaction masks a nuclear export signal in BRCA2. Interacts with both nonubiquitinated and monoubiquitinated FANCD2; this complex also includes XRCC3 and phosphorylated FANCG. Part of a BRCA complex containing BRCA1, BRCA2 and PALB2. Component of the homologous recombination repair (HR) complex composed of ERCC5/XPG, BRCA2, PALB2, DSS1 and RAD51. Within the complex, interacts with ERCC5/XPG and PALB2. Interacts directly with PALB2 which may serve as a scaffold for a HR complex containing PALB2, BRCA2, RAD51C, RAD51 and XRCC3. Interacts with BRCA1 only in the presence of PALB2 which serves as the bridging protein. Interacts with POLH; the interaction is direct. Interacts with the TREX-2 complex subunits PCID2 and SEM1. Interacts with HSF2BP and BRME1; the interaction with HSF2BP is direct and allows the formation of a ternary complex. The complex BRME1:HSF2BP:BRCA2 interacts with SPATA22, MEIOB and RAD51. In terms of processing, phosphorylated by ATM upon irradiation-induced DNA damage. Phosphorylation by CHEK1 and CHEK2 regulates interaction with RAD51. Phosphorylation at Ser-3291 by CDK1 and CDK2 is low in S phase when recombination is active, but increases as cells progress towards mitosis; this phosphorylation prevents homologous recombination-dependent repair during S phase and G2 by inhibiting RAD51 binding. Ubiquitinated in the absence of DNA damage; this does not lead to proteasomal degradation. In contrast, ubiquitination in response to DNA damage leads to proteasomal degradation. In terms of tissue distribution, highest levels of expression in breast and thymus, with slightly lower levels in lung, ovary and spleen.

Its subcellular location is the nucleus. It is found in the cytoplasm. The protein resides in the cytoskeleton. The protein localises to the microtubule organizing center. It localises to the centrosome. Functionally, involved in double-strand break repair and/or homologous recombination. Binds RAD51 and potentiates recombinational DNA repair by promoting assembly of RAD51 onto single-stranded DNA (ssDNA). Acts by targeting RAD51 to ssDNA over double-stranded DNA, enabling RAD51 to displace replication protein-A (RPA) from ssDNA and stabilizing RAD51-ssDNA filaments by blocking ATP hydrolysis. Part of a PALB2-scaffolded HR complex containing RAD51C and which is thought to play a role in DNA repair by HR. May participate in S phase checkpoint activation. Binds selectively to ssDNA, and to ssDNA in tailed duplexes and replication fork structures. May play a role in the extension step after strand invasion at replication-dependent DNA double-strand breaks; together with PALB2 is involved in both POLH localization at collapsed replication forks and DNA polymerization activity. In concert with NPM1, regulates centrosome duplication. Interacts with the TREX-2 complex (transcription and export complex 2) subunits PCID2 and SEM1, and is required to prevent R-loop-associated DNA damage and thus transcription-associated genomic instability. Silencing of BRCA2 promotes R-loop accumulation at actively transcribed genes in replicating and non-replicating cells, suggesting that BRCA2 mediates the control of R-loop associated genomic instability, independently of its known role in homologous recombination. This is Breast cancer type 2 susceptibility protein from Homo sapiens (Human).